A 277-amino-acid polypeptide reads, in one-letter code: S-formylglutathione hydrolase FrmB (277 aa).

Catalysis depends on charge relay system residues S145, D221, and H254.

It belongs to the esterase D family.

The catalysed reaction is S-formylglutathione + H2O = formate + glutathione + H(+). Its function is as follows. Serine hydrolase involved in the detoxification of formaldehyde. Hydrolyzes S-formylglutathione to glutathione and formate. In Escherichia coli O6:K15:H31 (strain 536 / UPEC), this protein is S-formylglutathione hydrolase FrmB (frmB).